The following is a 1067-amino-acid chain: Kinesin-like protein KIF11-B (1067 aa).

Residues 18-359 (NIQVVVRCRP…LDYANRAKSI (342 aa)) form the Kinesin motor domain. 105 to 112 (GQTGTGKT) is a binding site for ATP. A coiled-coil region spans residues 365–480 (VNQKLTKKAL…SKEQLAQESF (116 aa)). Thr-937 is modified (phosphothreonine; by CDK1). Position 1046 is a phosphoserine; by NEK6 (Ser-1046).

This sequence belongs to the TRAFAC class myosin-kinesin ATPase superfamily. Kinesin family. BimC subfamily. As to quaternary structure, heterotetramer of two heavy and two light chains. Interacts with aurka. Phosphorylation of Thr-937 during mitosis controls the association of this protein with the spindle apparatus. In terms of processing, a subset of this protein primarily localized at the spindle pole is phosphorylated by NEK6 during mitosis. Post-translationally, phosphorylated on a serine residue by aurka. As to expression, in unfertilized eggs, shows highest expression in the germinal vesicle and radial yolk-poor channels. Also present in testis.

Its subcellular location is the cytoplasm. The protein localises to the cytoskeleton. It is found in the spindle pole. Its function is as follows. Plus end-directed motor protein required for establishing a bipolar spindle. Associates with both interphase and spindle microtubules. May be involved in nuclear divisions taking place during the development of unfertilized eggs. Required in non-mitotic cells for transport of secretory proteins from the Golgi complex to the cell surface. The polypeptide is Kinesin-like protein KIF11-B (kif11-b) (Xenopus laevis (African clawed frog)).